Consider the following 262-residue polypeptide: 3-methyl-2-oxobutanoate hydroxymethyltransferase (262 aa).

Residues D42 and D81 each contribute to the Mg(2+) site. 3-methyl-2-oxobutanoate is bound by residues 42–43, D81, and K110; that span reads DS. E112 lines the Mg(2+) pocket. Catalysis depends on E180, which acts as the Proton acceptor.

It belongs to the PanB family. In terms of assembly, homodecamer; pentamer of dimers. Mg(2+) is required as a cofactor.

The protein resides in the cytoplasm. It carries out the reaction 3-methyl-2-oxobutanoate + (6R)-5,10-methylene-5,6,7,8-tetrahydrofolate + H2O = 2-dehydropantoate + (6S)-5,6,7,8-tetrahydrofolate. The protein operates within cofactor biosynthesis; (R)-pantothenate biosynthesis; (R)-pantoate from 3-methyl-2-oxobutanoate: step 1/2. Functionally, catalyzes the reversible reaction in which hydroxymethyl group from 5,10-methylenetetrahydrofolate is transferred onto alpha-ketoisovalerate to form ketopantoate. This chain is 3-methyl-2-oxobutanoate hydroxymethyltransferase, found in Legionella pneumophila subsp. pneumophila (strain Philadelphia 1 / ATCC 33152 / DSM 7513).